The following is a 449-amino-acid chain: Histone-lysine N-methyltransferase SET5 (449 aa).

The region spanning 93–410 (PKVEVKMFAG…PGEELTISYV (318 aa)) is the SET domain.

This sequence belongs to the class V-like SAM-binding methyltransferase superfamily. Histone-lysine methyltransferase family. SET5 subfamily.

The protein localises to the nucleus. The protein resides in the chromosome. Its subcellular location is the cytoplasm. It carries out the reaction L-lysyl-[histone] + S-adenosyl-L-methionine = N(6)-methyl-L-lysyl-[histone] + S-adenosyl-L-homocysteine + H(+). Functionally, histone methyltransferase that monomethylates 'Lys-5', 'Lys-8' and 'Lys-12' of histone H4 (H4K5me1, H4K8me1 and H4K12me1, respectively), thereby controlling gene expression and remodeling chromatin structures. This Cryptococcus neoformans var. neoformans serotype D (strain B-3501A) (Filobasidiella neoformans) protein is Histone-lysine N-methyltransferase SET5 (SET5).